Reading from the N-terminus, the 290-residue chain is Ribosomal RNA small subunit methyltransferase A (290 aa).

The S-adenosyl-L-methionine site is built by asparagine 27, leucine 29, glycine 54, glutamate 75, aspartate 100, and asparagine 125.

This sequence belongs to the class I-like SAM-binding methyltransferase superfamily. rRNA adenine N(6)-methyltransferase family. RsmA subfamily.

It is found in the cytoplasm. The catalysed reaction is adenosine(1518)/adenosine(1519) in 16S rRNA + 4 S-adenosyl-L-methionine = N(6)-dimethyladenosine(1518)/N(6)-dimethyladenosine(1519) in 16S rRNA + 4 S-adenosyl-L-homocysteine + 4 H(+). In terms of biological role, specifically dimethylates two adjacent adenosines (A1518 and A1519) in the loop of a conserved hairpin near the 3'-end of 16S rRNA in the 30S particle. May play a critical role in biogenesis of 30S subunits. The sequence is that of Ribosomal RNA small subunit methyltransferase A from Streptococcus pneumoniae (strain ATCC BAA-255 / R6).